Reading from the N-terminus, the 286-residue chain is tRNA (guanine-N(7)-)-methyltransferase (286 aa).

S-adenosyl-L-methionine contacts are provided by residues glycine 103, 126-127 (EI), 161-162 (NA), and cysteine 181. Aspartate 184 is a catalytic residue. 259–261 (TEE) is a binding site for S-adenosyl-L-methionine.

The protein belongs to the class I-like SAM-binding methyltransferase superfamily. TrmB family. As to quaternary structure, forms a complex with TRM82.

The protein localises to the nucleus. It catalyses the reaction guanosine(46) in tRNA + S-adenosyl-L-methionine = N(7)-methylguanosine(46) in tRNA + S-adenosyl-L-homocysteine. The protein operates within tRNA modification; N(7)-methylguanine-tRNA biosynthesis. Its function is as follows. Catalyzes the formation of N(7)-methylguanine at position 46 (m7G46) in tRNA. This Vanderwaltozyma polyspora (strain ATCC 22028 / DSM 70294 / BCRC 21397 / CBS 2163 / NBRC 10782 / NRRL Y-8283 / UCD 57-17) (Kluyveromyces polysporus) protein is tRNA (guanine-N(7)-)-methyltransferase.